A 369-amino-acid polypeptide reads, in one-letter code: MAVSVTPIRDTKWLTLEVCREFQRGTCSRPDTECKFAHPSKSCQVENGRVIACFDSLKGRCSRENCKYLHPPPHLKTQLEINGRNNLIQQKNMAMLAQQMQLANAMMPGAPLQPVPMFSVAPSLATNASAAFNPYLGPVSPGLVPAEILPTAPMLVAGNPGVPVPAAAAAAAQKLMRTDRLEVCREYQRGNCNRGENDCRFAHPADSAMIDTNDNTVTVCMDYIKGRCSREKCKYFHPPAHLQAKIKAAQYQVNQAAAAQAAATAAAMGIPQAVLPPLPKRPALEKTNGATAVFNTGIFQYQQALANMQLQQHTAFLPPVPMVHGATPATVSAATTSATSVPFAATATANQIPIISAEHLTSHKYVTQM.

4 C3H1-type zinc fingers span residues 13–41 (WLTL…HPSK), 47–73 (NGRV…HPPP), 178–206 (TDRL…HPAD), and 214–240 (DNTV…HPPA).

Belongs to the muscleblind family.

The protein resides in the nucleus. The protein localises to the cytoplasm. It localises to the cytoplasmic granule. Involved in pre-mRNA alternative splicing regulation. Binds to CUG triplet repeat in RNA. The chain is Muscleblind-like protein 1 (MBNL1) from Gallus gallus (Chicken).